The primary structure comprises 352 residues: UDP-N-acetylglucosamine--N-acetylmuramyl-(pentapeptide) pyrophosphoryl-undecaprenol N-acetylglucosamine transferase (352 aa).

The UDP-N-acetyl-alpha-D-glucosamine site is built by serine 195 and glutamine 287.

Belongs to the glycosyltransferase 28 family. MurG subfamily.

It is found in the cell membrane. The enzyme catalyses Mur2Ac(oyl-L-Ala-gamma-D-Glu-L-Lys-D-Ala-D-Ala)-di-trans,octa-cis-undecaprenyl diphosphate + UDP-N-acetyl-alpha-D-glucosamine = beta-D-GlcNAc-(1-&gt;4)-Mur2Ac(oyl-L-Ala-gamma-D-Glu-L-Lys-D-Ala-D-Ala)-di-trans,octa-cis-undecaprenyl diphosphate + UDP + H(+). It participates in cell wall biogenesis; peptidoglycan biosynthesis. Its function is as follows. Cell wall formation. Catalyzes the transfer of a GlcNAc subunit on undecaprenyl-pyrophosphoryl-MurNAc-pentapeptide (lipid intermediate I) to form undecaprenyl-pyrophosphoryl-MurNAc-(pentapeptide)GlcNAc (lipid intermediate II). The sequence is that of UDP-N-acetylglucosamine--N-acetylmuramyl-(pentapeptide) pyrophosphoryl-undecaprenol N-acetylglucosamine transferase from Streptococcus pneumoniae (strain Hungary19A-6).